The chain runs to 1202 residues: Adenine-specific methyltransferase PglX (1202 aa).

Belongs to the methyltransferase superfamily. PglX adenine methyltransferase family.

The enzyme catalyses a 2'-deoxyadenosine in DNA + S-adenosyl-L-methionine = an N(6)-methyl-2'-deoxyadenosine in DNA + S-adenosyl-L-homocysteine + H(+). Functionally, BREX systems (bacteriophage exclusion) provide immunity against bacteriophage. Part of a type 1 BREX system which protects against dsDNA phage. This system allows phage adsorption but prevents phage DNA replication, without degradation of the phage DNA. Methylation of bacterial DNA by this protein guides self/non-self discrimination. Probably methylates the adenine in the fifth position of the hexamer 5'-ACRCAG-3' in genomic DNA. N(6)-methylated adenine on the fifth position of 5'-ACRCAG-3' is found in the genome; there are 1906 sites in the genomic DNA. The polypeptide is Adenine-specific methyltransferase PglX (Lacticaseibacillus casei (strain Zhang) (Lactobacillus casei)).